The primary structure comprises 330 residues: DNA-directed RNA polymerase subunit alpha (330 aa).

The interval methionine 1–arginine 236 is alpha N-terminal domain (alpha-NTD). An alpha C-terminal domain (alpha-CTD) region spans residues phenylalanine 250 to aspartate 330.

This sequence belongs to the RNA polymerase alpha chain family. Homodimer. The RNAP catalytic core consists of 2 alpha, 1 beta, 1 beta' and 1 omega subunit. When a sigma factor is associated with the core the holoenzyme is formed, which can initiate transcription.

The catalysed reaction is RNA(n) + a ribonucleoside 5'-triphosphate = RNA(n+1) + diphosphate. Its function is as follows. DNA-dependent RNA polymerase catalyzes the transcription of DNA into RNA using the four ribonucleoside triphosphates as substrates. The polypeptide is DNA-directed RNA polymerase subunit alpha (Vibrio cholerae serotype O1 (strain ATCC 39315 / El Tor Inaba N16961)).